We begin with the raw amino-acid sequence, 132 residues long: MDSRTGELITAHQAENGVYIWELENPLYFKIHRVEDPLYTRTRVYHVQIRFNHNLRKALHLHKAYLNFQVWTTSMTASGSIYLARFRYLVNMYLDQLGVISINNVVRAVRFATNRVYVNHVLENHSIKFKFY.

This sequence belongs to the geminiviridae replication enhancer protein family. As to quaternary structure, homooligomer. Interacts with the replication-associated protein (REP). Interacts with host proliferating cell nuclear antigen (PCNA). Interacts with host retinoblastoma-related protein 1 (RBR1), and may thereby deregulate the host cell cycle. Oligomerization and interaction with PCNA are necessary for optimal replication enhancement.

In terms of biological role, increases viral DNA accumulation. Enhances infectivity and symptom expression. The chain is Replication enhancer protein from Tomato mottle virus (isolate Florida) (ToMoV).